Reading from the N-terminus, the 239-residue chain is Major prion protein (239 aa).

Residues Met-1 to Cys-15 form the signal peptide. Residues Cys-15–Lys-98 form a disordered region. An interaction with ADGRG6 region spans residues Lys-16–Tyr-31. An interaction with GRB2, ERI3 and SYN1 region spans residues Lys-16–Ser-222. A run of 5 repeats spans residues Pro-44–Gln-51, Pro-52–Gln-59, Pro-60–Gln-67, Pro-68–Gln-75, and Pro-76–Gln-83. The 5 X 8 AA tandem repeats of P-H-G-G-G-W-G-Q stretch occupies residues Pro-44–Gln-83. Residues Gly-47–Thr-87 show a composition bias toward gly residues. The Cu(2+) site is built by His-53, Gly-54, Gly-55, His-61, Gly-62, Gly-63, His-69, Gly-70, Gly-71, His-77, Gly-78, and Gly-79. Cys-171 and Cys-206 are disulfide-bonded. Asn-173 and Asn-189 each carry an N-linked (GlcNAc...) asparagine glycan. A lipid anchor (GPI-anchor amidated serine) is attached at Ser-222. Positions Ser-223–Leu-239 are cleaved as a propeptide — removed in mature form.

This sequence belongs to the prion family. Monomer and homodimer. Has a tendency to aggregate into amyloid fibrils containing a cross-beta spine, formed by a steric zipper of superposed beta-strands. Soluble oligomers may represent an intermediate stage on the path to fibril formation. Copper binding may promote oligomerization. Interacts with GRB2, APP, ERI3/PRNPIP and SYN1. Mislocalized cytosolically exposed PrP interacts with MGRN1; this interaction alters MGRN1 subcellular location and causes lysosomal enlargement. Interacts with APP. Interacts with KIAA1191. Interacts with ADGRG6.

Its subcellular location is the cell membrane. It localises to the golgi apparatus. In terms of biological role, its primary physiological function is unclear. May play a role in neuronal development and synaptic plasticity. May be required for neuronal myelin sheath maintenance. May promote myelin homeostasis through acting as an agonist for ADGRG6 receptor. May play a role in iron uptake and iron homeostasis. Soluble oligomers are toxic to cultured neuroblastoma cells and induce apoptosis (in vitro). Association with GPC1 (via its heparan sulfate chains) targets PRNP to lipid rafts. Also provides Cu(2+) or Zn(2+) for the ascorbate-mediated GPC1 deaminase degradation of its heparan sulfate side chains. The sequence is that of Major prion protein (PRNP) from Aotus trivirgatus (Three-striped night monkey).